We begin with the raw amino-acid sequence, 233 residues long: 2,3,4,5-tetrahydropyridine-2,6-dicarboxylate N-acetyltransferase (233 aa).

This sequence belongs to the transferase hexapeptide repeat family. DapH subfamily.

It catalyses the reaction (S)-2,3,4,5-tetrahydrodipicolinate + acetyl-CoA + H2O = L-2-acetamido-6-oxoheptanedioate + CoA. Its pathway is amino-acid biosynthesis; L-lysine biosynthesis via DAP pathway; LL-2,6-diaminopimelate from (S)-tetrahydrodipicolinate (acetylase route): step 1/3. Functionally, catalyzes the transfer of an acetyl group from acetyl-CoA to tetrahydrodipicolinate. The sequence is that of 2,3,4,5-tetrahydropyridine-2,6-dicarboxylate N-acetyltransferase from Petrotoga mobilis (strain DSM 10674 / SJ95).